Consider the following 1094-residue polypeptide: Probable arabinosyltransferase C (1094 aa).

13 helical membrane passes run 28 to 50, 232 to 251, 264 to 286, 341 to 360, 373 to 392, 431 to 453, 466 to 488, 530 to 552, 565 to 582, 586 to 608, 620 to 642, 657 to 679, and 700 to 722; these read IARY…TPLL, AAMI…LHIL, PARW…WWHF, SIWM…WVIS, TSRA…WLPL, IGAL…LVAI, RFGV…IPIF, SIAR…AMSL, SRRI…MMFT, WTHH…AVAV, TVFA…GWWY, WRWS…AAWF, and LAGI…EVVS. Residues 817-831 are compositionally biased toward low complexity; it reads GSEPGTEGGTTAAPG. The segment at 817–836 is disordered; the sequence is GSEPGTEGGTTAAPGINGSR.

Belongs to the emb family.

It is found in the cell membrane. Its function is as follows. Arabinosyl transferase responsible for the polymerization of arabinose into the arabinan of arabinogalactan. This is Probable arabinosyltransferase C (embC) from Mycobacterium bovis (strain ATCC BAA-935 / AF2122/97).